We begin with the raw amino-acid sequence, 160 residues long: Ribosomal RNA large subunit methyltransferase H (160 aa).

Positions 76 and 108 each coordinate S-adenosyl-L-methionine.

The protein belongs to the RNA methyltransferase RlmH family. In terms of assembly, homodimer.

The protein resides in the cytoplasm. It catalyses the reaction pseudouridine(1915) in 23S rRNA + S-adenosyl-L-methionine = N(3)-methylpseudouridine(1915) in 23S rRNA + S-adenosyl-L-homocysteine + H(+). In terms of biological role, specifically methylates the pseudouridine at position 1915 (m3Psi1915) in 23S rRNA. The protein is Ribosomal RNA large subunit methyltransferase H of Rhodopseudomonas palustris (strain BisB5).